An 89-amino-acid chain; its full sequence is Small ribosomal subunit protein uS15 (89 aa).

Belongs to the universal ribosomal protein uS15 family. In terms of assembly, part of the 30S ribosomal subunit. Forms a bridge to the 50S subunit in the 70S ribosome, contacting the 23S rRNA.

Functionally, one of the primary rRNA binding proteins, it binds directly to 16S rRNA where it helps nucleate assembly of the platform of the 30S subunit by binding and bridging several RNA helices of the 16S rRNA. Its function is as follows. Forms an intersubunit bridge (bridge B4) with the 23S rRNA of the 50S subunit in the ribosome. This Syntrophomonas wolfei subsp. wolfei (strain DSM 2245B / Goettingen) protein is Small ribosomal subunit protein uS15.